Here is a 1035-residue protein sequence, read N- to C-terminus: Translation initiation factor IF-2 (1035 aa).

A compositionally biased stretch (basic and acidic residues) spans 56–66; it reads KDDKSNTDDNK. 2 disordered regions span residues 56–80 and 114–402; these read KDDK…SSEA and ANDA…VIKN. Residues 68 to 78 are compositionally biased toward polar residues; it reads ASAHSVAQHSS. Composition is skewed to basic and acidic residues over residues 114-137 and 146-200; these read ANDA…RVET and LVRE…EIKD. Residues 219-228 show a composition bias toward polar residues; sequence DSATNVNLNE. Over residues 229–238 the composition is skewed to basic and acidic residues; that stretch reads SIDKDKKTND. Residues 239–253 show a composition bias toward polar residues; sequence NRQVSTDNSAVNNEE. Basic and acidic residues predominate over residues 259-315; that stretch reads LNKKDMDKKNNNKKNEAKKNAEKKNEAKKNEKNDNKGGNAKKNEHRSPDMKKNDSNR. Over residues 316 to 325 the composition is skewed to polar residues; that stretch reads PQDANKQNSK. Composition is skewed to basic and acidic residues over residues 327-347 and 354-385; these read AADK…EIPK and QKEE…KEQP. The 170-residue stretch at 537-706 folds into the tr-type G domain; sequence PRPPVVVVMG…LLAADMLELK (170 aa). A G1 region spans residues 546–553; that stretch reads GHVDHGKT. 546-553 is a binding site for GTP; the sequence is GHVDHGKT. Residues 571–575 form a G2 region; that stretch reads GITQH. A G3 region spans residues 592–595; it reads DTPG. GTP-binding positions include 592-596 and 646-649; these read DTPGH and NKID. The segment at 646–649 is G4; sequence NKID. Residues 682–684 form a G5 region; it reads SAK.

This sequence belongs to the TRAFAC class translation factor GTPase superfamily. Classic translation factor GTPase family. IF-2 subfamily.

The protein resides in the cytoplasm. Its function is as follows. One of the essential components for the initiation of protein synthesis. Protects formylmethionyl-tRNA from spontaneous hydrolysis and promotes its binding to the 30S ribosomal subunits. Also involved in the hydrolysis of GTP during the formation of the 70S ribosomal complex. This Acetivibrio thermocellus (strain ATCC 27405 / DSM 1237 / JCM 9322 / NBRC 103400 / NCIMB 10682 / NRRL B-4536 / VPI 7372) (Clostridium thermocellum) protein is Translation initiation factor IF-2.